A 467-amino-acid chain; its full sequence is 3-isopropylmalate dehydratase large subunit (467 aa).

Cysteine 347, cysteine 407, and cysteine 410 together coordinate [4Fe-4S] cluster.

The protein belongs to the aconitase/IPM isomerase family. LeuC type 1 subfamily. Heterodimer of LeuC and LeuD. [4Fe-4S] cluster is required as a cofactor.

The catalysed reaction is (2R,3S)-3-isopropylmalate = (2S)-2-isopropylmalate. The protein operates within amino-acid biosynthesis; L-leucine biosynthesis; L-leucine from 3-methyl-2-oxobutanoate: step 2/4. Catalyzes the isomerization between 2-isopropylmalate and 3-isopropylmalate, via the formation of 2-isopropylmaleate. The sequence is that of 3-isopropylmalate dehydratase large subunit from Nostoc sp. (strain PCC 7120 / SAG 25.82 / UTEX 2576).